Reading from the N-terminus, the 279-residue chain is Pantothenate synthetase (279 aa).

Residue 27–34 (MGYLHEGH) coordinates ATP. The Proton donor role is filled by H34. Q58 lines the (R)-pantoate pocket. Q58 serves as a coordination point for beta-alanine. 144 to 147 (GKKD) lines the ATP pocket. Q150 contributes to the (R)-pantoate binding site. ATP is bound by residues V173 and 181 to 184 (MSSR).

It belongs to the pantothenate synthetase family. In terms of assembly, homodimer.

The protein resides in the cytoplasm. The enzyme catalyses (R)-pantoate + beta-alanine + ATP = (R)-pantothenate + AMP + diphosphate + H(+). Its pathway is cofactor biosynthesis; (R)-pantothenate biosynthesis; (R)-pantothenate from (R)-pantoate and beta-alanine: step 1/1. Functionally, catalyzes the condensation of pantoate with beta-alanine in an ATP-dependent reaction via a pantoyl-adenylate intermediate. This is Pantothenate synthetase from Geobacter sp. (strain M21).